Reading from the N-terminus, the 459-residue chain is Anthocyanidin 3-O-glucoside 2''-O-glucosyltransferase (459 aa).

His-20 serves as the catalytic Proton acceptor. Position 20 (His-20) interacts with an anthocyanidin. Asp-117 functions as the Charge relay in the catalytic mechanism. Residues Thr-138, Val-335, Gln-337, His-352, Trp-355, Ser-357, and Glu-360 each contribute to the UDP-alpha-D-glucose site. An an anthocyanidin-binding site is contributed by Gly-375. UDP-alpha-D-glucose-binding residues include Asp-376 and Gln-377.

The protein belongs to the UDP-glycosyltransferase family. As to expression, mainly expressed in the petals and tubes of flower buds at around 24 hours before flower opening.

The enzyme catalyses an anthocyanidin 3-O-beta-D-glucoside + UDP-alpha-D-glucose = an anthocyanidin 3-O-sophoroside + UDP + 2 H(+). Its pathway is pigment biosynthesis; anthocyanin biosynthesis. Functionally, glycosyltransferase that mediates the glucosylation of anthocyanidin 3-O-glucosides to yield anthocyanidin 3-O-sophorosides. 3-O-sophoroside derivatives are required for the bright blue or red color of flowers. This chain is Anthocyanidin 3-O-glucoside 2''-O-glucosyltransferase (3GGT), found in Ipomoea nil (Japanese morning glory).